The chain runs to 133 residues: Core atranone cluster (CAC) protein 11 (133 aa).

It functions in the pathway mycotoxin biosynthesis. Part of the core atranone cluster (CAC) which products are predicted to catalyze most or all steps of mycotoxin atranone synthesis, starting from geranylgeranyl pyrophosphate (GGPP). The initial cyclization of GGPP to dolabellane is probably performed by the terpene cyclase ATR13. The Baeyer-Villiger oxidation near the end of the atranone synthesis, which converts atranones D and E to atranones F and G is predicted to be catalyzed by the monooxygenase ATR8. Of the CAC's other predicted gene products, the reducing PKS ATR6 might synthesize a polyketide chain. This polyketide is probably transferred onto the atranone backbone by the polyketide transferase ATR5. Other predicted CAC products include 4 oxygenases (ATR2, ATR3, ATR4, and ATR14), 3 short-chain reductases (ATR7, ATR9, and ATR10), and a methyltransferase (ATR12). These may all be involved in the various steps of atranone biosynthesis, although their specific roles must await experimental determination. The protein is Core atranone cluster (CAC) protein 11 of Stachybotrys chlorohalonatus (strain IBT 40285).